Consider the following 245-residue polypeptide: Vacuolar iron transporter (245 aa).

The Cytoplasmic portion of the chain corresponds to 1-28 (MGEVGESEKYLLNRHKEHHFTAGETVRD). A helical transmembrane segment spans residues 29–49 (IIIGFSDGLTVPFALAAGLSG). Topologically, residues 50–55 (ANASSS) are vacuolar. Residues 56-76 (IILTAGIAEVAAGAISMGLGG) traverse the membrane as a helical segment. Topologically, residues 77–162 (YLAAKSEADH…PRRALQSALT (86 aa)) are cytoplasmic. Fe cation is bound by residues E94, E97, E105, E108, M141, and E145. A helical transmembrane segment spans residues 163 to 183 (IAISYVLSGLIPLLPYMFIPI). Over 184–186 (AQK) the chain is Vacuolar. Residues 187–207 (AVVSSVIVTIFALLIFGFAKG) form a helical membrane-spanning segment. The Cytoplasmic segment spans residues 208 to 214 (YFTGNKP). The chain crosses the membrane as a helical span at residues 215-235 (VWSALQTALIGAIASAAAFGM). The Vacuolar segment spans residues 236–245 (AKGCASSVFE).

Belongs to the CCC1 family. As to expression, expressed in petal tissues, but not in other parts of the plant, such as leaves, roots, sepals and stems.

It localises to the vacuole membrane. The enzyme catalyses Fe(2+)(in) = Fe(2+)(out). Functionally, vacuolar iron transporter involved in the transfer of iron ions from the cytosol to the vacuole for intracellular iron storage. Plays an essential role in the development of blue coloration in cornflower petals. This chain is Vacuolar iron transporter, found in Centaurea cyanus (Garden cornflower).